The sequence spans 678 residues: Secretin ExeD (678 aa).

A signal peptide spans 1 to 25; sequence MINKGKGWRLATVAAALMMAGSAWA. The N0 stretch occupies residues 26-122; sequence TEYSASFKNA…VVDETNPGIG (97 aa). Positions 124–188 are N1; sequence EMVTRVVPVR…EVVRRVDKAG (65 aa). The N2 stretch occupies residues 189–264; the sequence is DQEVDIIKLK…MVRQLDRDLQ (76 aa). An N3 region spans residues 267–348; the sequence is GNTRVFYLKY…ELEQVVAKLD (82 aa). The tract at residues 353–602 is secretin; that stretch reads QVLVEAIIVE…VFIRPTILRD (250 aa). The tract at residues 604 to 678 is s domain; that stretch reads NVYSGISSNK…GVQPFVQGNK (75 aa).

This sequence belongs to the bacterial secretin family. GSP D subfamily. Forms a cylindrical channel with 15 subunits.

It localises to the cell outer membrane. Functionally, involved in a type II secretion system (T2SS, formerly general secretion pathway, GSP) for the export of proteins. This subunit forms the outer membrane channel. The protein is Secretin ExeD (exeD) of Aeromonas hydrophila.